The primary structure comprises 430 residues: Tol-Pal system protein TolB (430 aa).

The first 21 residues, 1–21 (MKQAFRVALGFLILWASVLHA), serve as a signal peptide directing secretion.

It belongs to the TolB family. As to quaternary structure, the Tol-Pal system is composed of five core proteins: the inner membrane proteins TolA, TolQ and TolR, the periplasmic protein TolB and the outer membrane protein Pal. They form a network linking the inner and outer membranes and the peptidoglycan layer.

Its subcellular location is the periplasm. Its function is as follows. Part of the Tol-Pal system, which plays a role in outer membrane invagination during cell division and is important for maintaining outer membrane integrity. TolB occupies a key intermediary position in the Tol-Pal system because it communicates directly with both membrane-embedded components, Pal in the outer membrane and TolA in the inner membrane. The sequence is that of Tol-Pal system protein TolB from Serratia proteamaculans (strain 568).